Reading from the N-terminus, the 239-residue chain is Methylthioribulose-1-phosphate dehydratase (239 aa).

Position 94 (Cys-94) interacts with substrate. Residues His-112 and His-114 each coordinate Zn(2+). The Proton donor/acceptor role is filled by Glu-136. Position 192 (His-192) interacts with Zn(2+).

Belongs to the aldolase class II family. MtnB subfamily. Zn(2+) serves as cofactor.

It localises to the cytoplasm. The enzyme catalyses 5-(methylsulfanyl)-D-ribulose 1-phosphate = 5-methylsulfanyl-2,3-dioxopentyl phosphate + H2O. It functions in the pathway amino-acid biosynthesis; L-methionine biosynthesis via salvage pathway; L-methionine from S-methyl-5-thio-alpha-D-ribose 1-phosphate: step 2/6. Functionally, catalyzes the dehydration of methylthioribulose-1-phosphate (MTRu-1-P) into 2,3-diketo-5-methylthiopentyl-1-phosphate (DK-MTP-1-P). Functions in the methionine salvage pathway. May play a role in apoptosis. The protein is Methylthioribulose-1-phosphate dehydratase of Aquarana catesbeiana (American bullfrog).